A 433-amino-acid chain; its full sequence is Vesicle-associated protein (433 aa).

Repeat copies occupy residues 112-122 and 219-229. Residues 112–350 form a 3 X 11 AA repeats of G-G-G-I-G-G-G-L-G-G-G region; sequence GGGIGGGLGG…GGIGGGLGGG (239 aa). The short motif at 266-274 is the Nuclear localization signal element; sequence VDGKKKGKG. The stretch at 340–350 is repeat 3; sequence GGGIGGGLGGG. Disordered stretches follow at residues 366–389 and 411–433; these read RVGG…DGDG and HGKG…NVSG. Residues 423-433 are compositionally biased toward basic and acidic residues; the sequence is DIERPDLNVSG.

In terms of tissue distribution, egg cortex.

The protein localises to the microsome membrane. The protein resides in the nucleus. It is found in the endoplasmic reticulum membrane. May function as a multidomain RNA-binding protein. May play a role in nuclear RNA processing and in early development. The polypeptide is Vesicle-associated protein (VAP-1) (Strongylocentrotus purpuratus (Purple sea urchin)).